We begin with the raw amino-acid sequence, 86 residues long: Polcalcin Che a 3 (86 aa).

2 consecutive EF-hand domains span residues 8–43 and 43–78; these read QDIADRERIFKRFDTNGDGKISSSELGDALKTLGSV and VTPDEVRRMMAEIDTDGDGFISFDEFTDFARANRGL. Positions 21, 23, 25, 27, 32, 56, 58, 60, and 67 each coordinate Ca(2+).

The protein is Polcalcin Che a 3 of Chenopodium album (Fat hen).